The primary structure comprises 531 residues: RCC1 and BTB domain-containing protein 1 (531 aa).

RCC1 repeat units follow at residues 40-91 (NDEV…LLST), 93-145 (DGVV…ALAA), 147-198 (GEVF…AVLD), 199-250 (NGEV…ALTD), 252-302 (GLLY…AAKT), and 304-356 (GGHV…FLTV). BTB domains are found at residues 370–437 (ADLK…DLPP) and 470–499 (ENAFSLFSAAVRYDAEDLEEFCFKFCINHL).

As to expression, ubiquitously expressed. In the retina, present in the nerve fiber layer and to a lesser extent in the inner and outer plexiform layers (at protein level).

Its subcellular location is the nucleus. Its function is as follows. May be involved in cell cycle regulation by chromatin remodeling. The chain is RCC1 and BTB domain-containing protein 1 (RCBTB1) from Homo sapiens (Human).